Here is a 245-residue protein sequence, read N- to C-terminus: 2,3-bisphosphoglycerate-dependent phosphoglycerate mutase (245 aa).

Substrate is bound by residues 8-15 (RHGQSLWN), 21-22 (TG), arginine 60, 87-90 (ERHY), lysine 98, 114-115 (RR), and 183-184 (GN). The active-site Tele-phosphohistidine intermediate is the histidine 9. Catalysis depends on glutamate 87, which acts as the Proton donor/acceptor.

It belongs to the phosphoglycerate mutase family. BPG-dependent PGAM subfamily.

It catalyses the reaction (2R)-2-phosphoglycerate = (2R)-3-phosphoglycerate. It functions in the pathway carbohydrate degradation; glycolysis; pyruvate from D-glyceraldehyde 3-phosphate: step 3/5. In terms of biological role, catalyzes the interconversion of 2-phosphoglycerate and 3-phosphoglycerate. The sequence is that of 2,3-bisphosphoglycerate-dependent phosphoglycerate mutase from Bacillus cytotoxicus (strain DSM 22905 / CIP 110041 / 391-98 / NVH 391-98).